A 318-amino-acid chain; its full sequence is Deoxyhypusine hydroxylase (318 aa).

Fe cation contacts are provided by His65, Glu66, His98, and Glu99. 4 HEAT-like PBS-type repeats span residues 96–122 (VRHEAAEALGALGFTESLPVLEKYYKE), 194–220 (YRYRVMFRLRNIGNEEAVLALTDGFKD), 225–251 (FRHEIAFVFGQMIAPASVPALIKVLEN), and 258–284 (VRHEAAEALGGIANDECLPVLKKFSKD). Positions 227, 228, 260, and 261 each coordinate Fe cation.

It belongs to the deoxyhypusine hydroxylase family. Fe(2+) is required as a cofactor.

The protein localises to the cytoplasm. It localises to the nucleus. The catalysed reaction is [eIF5A protein]-deoxyhypusine + AH2 + O2 = [eIF5A protein]-hypusine + A + H2O. The protein operates within protein modification; eIF5A hypusination. Its function is as follows. Catalyzes the hydroxylation of the N(6)-(4-aminobutyl)-L-lysine intermediate to form hypusine, an essential post-translational modification only found in mature eIF-5A factor. The chain is Deoxyhypusine hydroxylase (lia1) from Schizosaccharomyces pombe (strain 972 / ATCC 24843) (Fission yeast).